The following is a 407-amino-acid chain: Serine/threonine transporter SstT (407 aa).

Helical transmembrane passes span 12-32 (GNLIVQICIGIVLGILIGISS), 42-62 (LGILFTSALKAIAPMLVFILI), 81-101 (IIILYIVGTFLASACAVLANF), 141-161 (ALSSGNYLGILTWAIAGGIAL), 179-199 (VLKIVKFIVKLAPFGIFGLVA), 218-238 (ILLVATMLFVTFVINALIVFF), 245-267 (FPLIFICLRHSAFFAFFTRSSAA), 288-308 (ISIPLGATINMAGAAVTIAIL), and 330-350 (IIATFAACGASGVAGGSLLLI).

It belongs to the dicarboxylate/amino acid:cation symporter (DAACS) (TC 2.A.23) family.

It localises to the cell inner membrane. It catalyses the reaction L-serine(in) + Na(+)(in) = L-serine(out) + Na(+)(out). It carries out the reaction L-threonine(in) + Na(+)(in) = L-threonine(out) + Na(+)(out). Involved in the import of serine and threonine into the cell, with the concomitant import of sodium (symport system). The protein is Serine/threonine transporter SstT of Campylobacter jejuni subsp. jejuni serotype O:23/36 (strain 81-176).